Consider the following 140-residue polypeptide: Lymphocyte antigen 6H (140 aa).

The first 25 residues, 1-25 (MLPAAMKGLGLALLAVLLCSAPAHG), serve as a signal peptide directing secretion. In terms of domain architecture, UPAR/Ly6 spans 26–91 (LWCQDCTLTT…RHFFSDYLMG (66 aa)). 5 cysteine pairs are disulfide-bonded: Cys-28/Cys-52, Cys-31/Cys-40, Cys-45/Cys-73, Cys-77/Cys-104, and Cys-105/Cys-110. N-linked (GlcNAc...) asparagine glycosylation occurs at Asn-36. Gly-115 carries the GPI-anchor amidated glycine lipid modification. The propeptide at 116–140 (AGHSPWALAGGLLLSLGPALLWAGP) is removed in mature form.

In terms of assembly, interacts with CHRNA4 and CHRNA7. Highly expressed in brain (cerebral cortex, amygdala, hippocampus and subthalamic nucleus) and in acute human leukemic cell line MOLT-3. Also found in lower levels in testis, pancreas, small intestine and colon.

It localises to the cell membrane. Functionally, believed to act as a modulator of nicotinic acetylcholine receptors (nAChRs) activity. In vitro inhibits alpha-3:beta-4-containing nAChRs maximum response. May play a role in the intracellular trafficking of alpha-7-containing nAChRs and may inhibit their expression at the cell surface. Seems to inhibit alpha-7/CHRNA7 signaling in hippocampal neurons. The polypeptide is Lymphocyte antigen 6H (LY6H) (Homo sapiens (Human)).